Here is a 150-residue protein sequence, read N- to C-terminus: MFEFNLTVPAGATHKKKIVGRGSSSGWGKTSGKGHKGQQARSGGKVYAGFEGGQMPLYRRVAKKGFSNYPFKKEFYVVNLAMLETKYSDGETVNKESLMQKGLLRKGSLYVKVLGTGDITKKLTVDVDRISASAKEKIEKAGGTIVQSEA.

The interval 18–43 is disordered; the sequence is IVGRGSSSGWGKTSGKGHKGQQARSG.

This sequence belongs to the universal ribosomal protein uL15 family. As to quaternary structure, part of the 50S ribosomal subunit.

In terms of biological role, binds to the 23S rRNA. In Treponema denticola (strain ATCC 35405 / DSM 14222 / CIP 103919 / JCM 8153 / KCTC 15104), this protein is Large ribosomal subunit protein uL15.